Consider the following 485-residue polypeptide: NADH-quinone oxidoreductase subunit N (485 aa).

14 helical membrane-spanning segments follow: residues 8 to 28 (LIALLPLLIVGLTVVVVMLSI), 35 to 55 (FLNATLSVLGLNAALVSLWFV), 75 to 95 (LYTGLVLLASLATCTFAYPWL), 105 to 125 (FYLLVLIAALGGILLAGANHL), 127 to 147 (ALFLGIELISLPLFGLVGYAF), 159 to 179 (YTILSAAASSFLLFGMALVYA), 203 to 223 (LLAGLGLMIVGLGFKLSLVPF), 235 to 255 (PAPVSTFLATASKIAIFGVVM), 271 to 291 (VVLGLIAFASIIFGNLMALSQ), 297 to 317 (LLGYSSISHLGYLLVALIALQ), 326 to 346 (VGVYLAGYLFSSLGAFGVVSL), 374 to 394 (AVMTVMMLSLAGIPMTLGFIG), 408 to 430 (WWLVAAVVVGSAIGLYYYLRVAV), and 455 to 475 (IVVLISALLVLVLGIWPQPLI).

This sequence belongs to the complex I subunit 2 family. In terms of assembly, NDH-1 is composed of 13 different subunits. Subunits NuoA, H, J, K, L, M, N constitute the membrane sector of the complex.

It localises to the cell inner membrane. It carries out the reaction a quinone + NADH + 5 H(+)(in) = a quinol + NAD(+) + 4 H(+)(out). NDH-1 shuttles electrons from NADH, via FMN and iron-sulfur (Fe-S) centers, to quinones in the respiratory chain. The immediate electron acceptor for the enzyme in this species is believed to be ubiquinone. Couples the redox reaction to proton translocation (for every two electrons transferred, four hydrogen ions are translocated across the cytoplasmic membrane), and thus conserves the redox energy in a proton gradient. This Klebsiella pneumoniae subsp. pneumoniae (strain ATCC 700721 / MGH 78578) protein is NADH-quinone oxidoreductase subunit N.